The sequence spans 109 residues: GPRTRRVKRSHNGKNGSPEEKRPRTAFSAEQLARLKREFAENRYLTERRRQQLSRDLGLTEAQIKIWFQNKRAKIKKASGQKNPLALQLMAQGLYNHSTVPVDEDGEEI.

A compositionally biased stretch (basic residues) spans 1-12 (GPRTRRVKRSHN). The disordered stretch occupies residues 1–27 (GPRTRRVKRSHNGKNGSPEEKRPRTAF). A DNA-binding region (homeobox) is located at residues 20–79 (EKRPRTAFSAEQLARLKREFAENRYLTERRRQQLSRDLGLTEAQIKIWFQNKRAKIKKAS).

This sequence belongs to the engrailed homeobox family.

The protein localises to the nucleus. This is Homeobox protein E30 from Apis mellifera (Honeybee).